A 933-amino-acid chain; its full sequence is Phosphoenolpyruvate carboxylase (933 aa).

Catalysis depends on residues His164 and Lys595.

The protein belongs to the PEPCase type 1 family. It depends on Mg(2+) as a cofactor.

The catalysed reaction is oxaloacetate + phosphate = phosphoenolpyruvate + hydrogencarbonate. In terms of biological role, forms oxaloacetate, a four-carbon dicarboxylic acid source for the tricarboxylic acid cycle. This is Phosphoenolpyruvate carboxylase from Rhodopseudomonas palustris (strain BisB5).